Reading from the N-terminus, the 247-residue chain is Probable 2-phosphosulfolactate phosphatase (247 aa).

This sequence belongs to the ComB family. It depends on Mg(2+) as a cofactor.

It carries out the reaction (2R)-O-phospho-3-sulfolactate + H2O = (2R)-3-sulfolactate + phosphate. The chain is Probable 2-phosphosulfolactate phosphatase from Clostridium perfringens (strain 13 / Type A).